Consider the following 248-residue polypeptide: ATP synthase subunit a (248 aa).

A run of 7 helical transmembrane segments spans residues 29-49 (AMLTTCVSLSFFLFLFYCLFS), 85-105 (VFPFLFVIFSFILISNVQGLV), 115-135 (LIQTMVLALTVFIGVIIIVLA), 143-163 (LFLPGGTSIVLAFLLVPIEIV), 176-196 (LFANMMAGHTLLKVIAAVAWA), 201-221 (GGLLLIAHIVPLGVLVILFGL), and 227-247 (LIQAYVFTILSCIYINDAIVL).

It belongs to the ATPase A chain family. In terms of assembly, F-type ATPases have 2 components, CF(1) - the catalytic core - and CF(0) - the membrane proton channel. CF(1) has five subunits: alpha(3), beta(3), gamma(1), delta(1), epsilon(1). CF(0) has three main subunits: a, b and c.

Its subcellular location is the mitochondrion inner membrane. In terms of biological role, mitochondrial membrane ATP synthase (F(1)F(0) ATP synthase or Complex V) produces ATP from ADP in the presence of a proton gradient across the membrane which is generated by electron transport complexes of the respiratory chain. F-type ATPases consist of two structural domains, F(1) - containing the extramembraneous catalytic core and F(0) - containing the membrane proton channel, linked together by a central stalk and a peripheral stalk. During catalysis, ATP synthesis in the catalytic domain of F(1) is coupled via a rotary mechanism of the central stalk subunits to proton translocation. Key component of the proton channel; it may play a direct role in the translocation of protons across the membrane. The protein is ATP synthase subunit a (ATP6) of Pylaiella littoralis (Seaweed).